A 782-amino-acid chain; its full sequence is Endonuclease MutS2 (782 aa).

336 to 343 (GPNTGGKT) is a binding site for ATP. Residues 707-782 (LDLRGYRYED…GFGVTVATLK (76 aa)) form the Smr domain.

The protein belongs to the DNA mismatch repair MutS family. MutS2 subfamily. Homodimer. Binds to stalled ribosomes, contacting rRNA.

Its function is as follows. Endonuclease that is involved in the suppression of homologous recombination and thus may have a key role in the control of bacterial genetic diversity. Acts as a ribosome collision sensor, splitting the ribosome into its 2 subunits. Detects stalled/collided 70S ribosomes which it binds and splits by an ATP-hydrolysis driven conformational change. Acts upstream of the ribosome quality control system (RQC), a ribosome-associated complex that mediates the extraction of incompletely synthesized nascent chains from stalled ribosomes and their subsequent degradation. Probably generates substrates for RQC. This chain is Endonuclease MutS2, found in Staphylococcus aureus (strain Mu50 / ATCC 700699).